Here is an 883-residue protein sequence, read N- to C-terminus: Valine--tRNA ligase (883 aa).

The 'HIGH' region signature appears at 50–60 (PNVTGKLHMGH). The 'KMSKS' region motif lies at 527–531 (KMSKS). Lys530 contributes to the ATP binding site. Positions 811–883 (LNELIDLDEE…KQRLEQLQRA (73 aa)) form a coiled coil. A disordered region spans residues 859–883 (QRTKRSDFEDQLTSTKQRLEQLQRA).

The protein belongs to the class-I aminoacyl-tRNA synthetase family. ValS type 1 subfamily. As to quaternary structure, monomer.

The protein resides in the cytoplasm. The catalysed reaction is tRNA(Val) + L-valine + ATP = L-valyl-tRNA(Val) + AMP + diphosphate. Functionally, catalyzes the attachment of valine to tRNA(Val). As ValRS can inadvertently accommodate and process structurally similar amino acids such as threonine, to avoid such errors, it has a 'posttransfer' editing activity that hydrolyzes mischarged Thr-tRNA(Val) in a tRNA-dependent manner. The sequence is that of Valine--tRNA ligase from Lacticaseibacillus casei (Lactobacillus casei).